Consider the following 418-residue polypeptide: Hydroxysteroid dehydrogenase-like protein 2 (418 aa).

NADP(+) contacts are provided by residues 17-23, K42, and D74; that span reads GASRGIG. N6-(2-hydroxyisobutyryl)lysine is present on K42. K116 bears the N6-acetyllysine mark. Catalysis depends on Y168, which acts as the Proton acceptor. K172 lines the NADP(+) pocket. The SCP2 domain maps to 306–415; it reads RSGAVEETFR…KLEKLMNQMN (110 aa). Position 318 is an N6-succinyllysine (K318).

The protein belongs to the short-chain dehydrogenases/reductases (SDR) family.

It localises to the peroxisome. The protein resides in the mitochondrion. Its function is as follows. Has apparently no steroid dehydrogenase activity. Controls bile acid (BA) and lipid metabolism in response to nutritional cues. The chain is Hydroxysteroid dehydrogenase-like protein 2 (HSDL2) from Bos taurus (Bovine).